A 288-amino-acid chain; its full sequence is Geranylgeranyl diphosphate synthase (288 aa).

Residues arginine 43 and histidine 73 each coordinate isopentenyl diphosphate. Positions 80 and 86 each coordinate Mg(2+). Arginine 91 is a binding site for (2E,6E)-farnesyl diphosphate. Arginine 92 is an isopentenyl diphosphate binding site. (2E,6E)-farnesyl diphosphate contacts are provided by lysine 170, threonine 171, and glutamine 205.

This sequence belongs to the FPP/GGPP synthase family. Mg(2+) serves as cofactor.

The enzyme catalyses isopentenyl diphosphate + (2E,6E)-farnesyl diphosphate = (2E,6E,10E)-geranylgeranyl diphosphate + diphosphate. The protein operates within isoprenoid biosynthesis; geranylgeranyl diphosphate biosynthesis; geranylgeranyl diphosphate from farnesyl diphosphate and isopentenyl diphosphate: step 1/1. Functionally, catalyzes the condensation of farnesyl diphosphate (FPP) and isopentenyl diphosphate (IPP) to yield geranylgeranyl diphosphate (GGPP) needed for biosynthesis of carotenoids and diterpenes. The protein is Geranylgeranyl diphosphate synthase (crtE) of Cereibacter sphaeroides (strain ATCC 17023 / DSM 158 / JCM 6121 / CCUG 31486 / LMG 2827 / NBRC 12203 / NCIMB 8253 / ATH 2.4.1.) (Rhodobacter sphaeroides).